The chain runs to 576 residues: MSTLLNSVLSMASPESSPRKAVGFVSHIPSGFLHFSSVSKGVARVLASTQITLSPKDSAFTITGSSWKPDLDSGSFSDDPRSDEPNLSDSFSHLESLVTGGHKPNVAHSTQLLYDLCKANRLKKAIRVIELMVSSGIIPDASAYTYLVNQLCKRGNVGYAMQLVEKMEDHGYPSNTVTYNALVRGLCMLGSLNQSLQFVERLMQKGLAPNAFTYSFLLEAAYKERGTDEAVKLLDEIIVKGGEPNLVSYNVLLTGFCKEGRTDDAMALFRELPAKGFKANVVSYNILLRCLCCDGRWEEANSLLAEMDGGDRAPSVVTYNILINSLAFHGRTEQALQVLKEMSKGNHQFRVTATSYNPVIARLCKEGKVDLVVKCLDEMIYRRCKPNEGTYNAIGSLCEHNSKVQEAFYIIQSLSNKQKCCTHDFYKSVITSLCRKGNTFAAFQLLYEMTRCGFDPDAHTYSALIRGLCLEGMFTGAMEVLSIMEESENCKPTVDNFNAMILGLCKIRRTDLAMEVFEMMVEKKRMPNETTYAILVEGIAHEDELELAKEVLDELRLRKVIGQNAVDRIVMQFNLD.

A chloroplast-targeting transit peptide spans 1-37; that stretch reads MSTLLNSVLSMASPESSPRKAVGFVSHIPSGFLHFSS. 13 PPR repeats span residues 105–139, 140–174, 175–209, 210–244, 245–279, 280–314, 315–349, 352–386, 387–417, 422–456, 457–487, 493–527, and 528–562; these read NVAH…GIIP, DASA…GYPS, NTVT…GLAP, NAFT…GGEP, NLVS…GFKA, NVVS…DRAP, SVVT…NHQF, TATS…RCKP, NEGT…LSNK, THDF…GFDP, DAHT…MEES, TVDN…KRMP, and NETT…KVIG.

The protein belongs to the PPR family. P subfamily.

The protein resides in the plastid. It is found in the chloroplast. The sequence is that of Pentatricopeptide repeat-containing protein At1g79080, chloroplastic from Arabidopsis thaliana (Mouse-ear cress).